The primary structure comprises 881 residues: Squamosa promoter-binding-like protein 1 (881 aa).

A disordered region spans residues 49–69 (FPLGNSSNSSSSCSDEGNDKK). Over residues 53 to 62 (NSSNSSSSCS) the composition is skewed to low complexity. The tract at residues 96–187 (PAKKTKSGAV…RKTNPEPGAN (92 aa)) is sufficient and necessary for DNA binding. The segment at 103–180 (GAVCQVENCE…AGHNKRRRKT (78 aa)) adopts an SBP-type zinc-finger fold. Zn(2+)-binding residues include Cys106, Cys111, Cys128, His131, Cys147, Cys150, His154, and Cys166. The Bipartite nuclear localization signal signature appears at 163–179 (KRSCRRRLAGHNKRRRK). The segment covering 170–179 (LAGHNKRRRK) has biased composition (basic residues). 2 disordered regions span residues 170-193 (LAGH…PSDD) and 274-358 (FSAR…EDAQ). Polar residues predominate over residues 275-284 (SARQDGTATE). Residues 285–295 (NRSEKQVKMND) show a composition bias toward basic and acidic residues. A compositionally biased stretch (polar residues) spans 319–338 (PATSSLDYPSWIHQSSPPQT). The span at 339-356 (SRNSDSASDQSPSSSSED) shows a compositional bias: low complexity.

The cofactor is Zn(2+).

The protein localises to the nucleus. Functionally, trans-acting factor that binds specifically to the consensus nucleotide sequence 5'-TNCGTACAA-3' of AP1 promoter. Binds specifically to the 5'-GTAC-3' core sequence. The protein is Squamosa promoter-binding-like protein 1 (SPL1) of Arabidopsis thaliana (Mouse-ear cress).